An 873-amino-acid polypeptide reads, in one-letter code: Leucine--tRNA ligase (873 aa).

The 'HIGH' region signature appears at 41–51; sequence PYPSGRIHMGH. A 'KMSKS' region motif is present at residues 645–649; that stretch reads KMSKS. Lysine 648 contacts ATP.

It belongs to the class-I aminoacyl-tRNA synthetase family.

Its subcellular location is the cytoplasm. It carries out the reaction tRNA(Leu) + L-leucine + ATP = L-leucyl-tRNA(Leu) + AMP + diphosphate. The polypeptide is Leucine--tRNA ligase (Cereibacter sphaeroides (strain ATCC 17025 / ATH 2.4.3) (Rhodobacter sphaeroides)).